Here is a 257-residue protein sequence, read N- to C-terminus: Protein orai-2 (257 aa).

The next 4 membrane-spanning stretches (helical) occupy residues 62–79, 94–114, 156–176, and 201–221; these read ASSR…VAMV, LIAF…ALLI, LGIL…FLPI, and LVST…TIHF.

Belongs to the Orai family.

It is found in the membrane. Its function is as follows. Ca(2+) release-activated Ca(2+)-like (CRAC-like) channel subunit which mediates Ca(2+) influx and increase in Ca(2+)-selective current by synergy with the Ca(2+) sensor, stim1. This is Protein orai-2 (orai2) from Xenopus laevis (African clawed frog).